A 319-amino-acid polypeptide reads, in one-letter code: Cytochrome f (319 aa).

An N-terminal signal peptide occupies residues 1–35 (MFQQMQKISLKLLKTTFLFLFATFILVGLPSTSQA). Heme is bound by residues Tyr36, Cys56, Cys59, and His60. The chain crosses the membrane as a helical span at residues 285–305 (IQGLIAFFISVIIAQTFLVLK).

The protein belongs to the cytochrome f family. The 4 large subunits of the cytochrome b6-f complex are cytochrome b6, subunit IV (17 kDa polypeptide, petD), cytochrome f and the Rieske protein, while the 4 small subunits are PetG, PetL, PetM and PetN. The complex functions as a dimer. Heme serves as cofactor.

Its subcellular location is the plastid. It localises to the chloroplast thylakoid membrane. Component of the cytochrome b6-f complex, which mediates electron transfer between photosystem II (PSII) and photosystem I (PSI), cyclic electron flow around PSI, and state transitions. In Chlorokybus atmophyticus (Soil alga), this protein is Cytochrome f.